The primary structure comprises 313 residues: Dihydroorotate dehydrogenase B (NAD(+)), catalytic subunit (313 aa).

Residues S21 and 45-46 (KA) each bind FMN. Substrate is bound by residues K45 and 69–73 (NAIGL). 2 residues coordinate FMN: N99 and N127. N127 is a substrate binding site. C130 acts as the Nucleophile in catalysis. FMN contacts are provided by K165 and I191. 192–193 (NT) lines the substrate pocket. FMN is bound by residues G217, 243-244 (GG), and 265-266 (GT).

The protein belongs to the dihydroorotate dehydrogenase family. Type 1 subfamily. As to quaternary structure, heterotetramer of 2 PyrK and 2 PyrD type B subunits. FMN is required as a cofactor.

It localises to the cytoplasm. It catalyses the reaction (S)-dihydroorotate + NAD(+) = orotate + NADH + H(+). It participates in pyrimidine metabolism; UMP biosynthesis via de novo pathway; orotate from (S)-dihydroorotate (NAD(+) route): step 1/1. In terms of biological role, catalyzes the conversion of dihydroorotate to orotate with NAD(+) as electron acceptor. The sequence is that of Dihydroorotate dehydrogenase B (NAD(+)), catalytic subunit (pyrD) from Geobacillus kaustophilus (strain HTA426).